The sequence spans 411 residues: Snake venom metalloproteinase ACLF (411 aa).

Residues 1–20 (MIQVLLVTLCLAAFPYQGSS) form the signal peptide. Positions 21 to 189 (IILESGNVND…KKAFQLNLTP (169 aa)) are excised as a propeptide. One can recognise a Peptidase M12B domain in the interval 197-393 (RYVELVIVAD…NNPQCILNKP (197 aa)). Positions 200 and 284 each coordinate Ca(2+). 3 disulfides stabilise this stretch: C308-C388, C348-C372, and C350-C355. Residue H333 coordinates Zn(2+). E334 is a catalytic residue. Residues H337 and H343 each contribute to the Zn(2+) site. Ca(2+) contacts are provided by C388, N391, V403, N406, L408, and E410.

It belongs to the venom metalloproteinase (M12B) family. P-I subfamily. Monomer. Zn(2+) serves as cofactor. As to expression, expressed by the venom gland.

The protein resides in the secreted. With respect to regulation, inhibited by EDTA and 1,10-phenanthroline, but not by PMSF. Snake venom zinc metalloprotease that has fibrinolytic activity. The recombinant enzyme cleaves both alpha- and beta-chains of fibrinogen, but not the gamma-chain. The recombinant protein does not produce hemorrhage in mice. Cleaves the peptide substrate Abz-LVEALYQ-EDDnp at the Ala-Leu bond in vitro. The polypeptide is Snake venom metalloproteinase ACLF (ACLPREF) (Agkistrodon contortrix laticinctus (Broad-banded copperhead)).